The chain runs to 513 residues: ATP synthase subunit alpha (513 aa).

ATP is bound at residue 169–176 (GDRQTGKT).

The protein belongs to the ATPase alpha/beta chains family. As to quaternary structure, F-type ATPases have 2 components, CF(1) - the catalytic core - and CF(0) - the membrane proton channel. CF(1) has five subunits: alpha(3), beta(3), gamma(1), delta(1), epsilon(1). CF(0) has three main subunits: a(1), b(2) and c(9-12). The alpha and beta chains form an alternating ring which encloses part of the gamma chain. CF(1) is attached to CF(0) by a central stalk formed by the gamma and epsilon chains, while a peripheral stalk is formed by the delta and b chains.

The protein localises to the cell inner membrane. It catalyses the reaction ATP + H2O + 4 H(+)(in) = ADP + phosphate + 5 H(+)(out). Functionally, produces ATP from ADP in the presence of a proton gradient across the membrane. The alpha chain is a regulatory subunit. This Mannheimia succiniciproducens (strain KCTC 0769BP / MBEL55E) protein is ATP synthase subunit alpha.